We begin with the raw amino-acid sequence, 329 residues long: Cytoplasmic phosphatidylinositol transfer protein 1 (329 aa).

A disordered region spans residues 267–329 (SHGGYSSAPS…GNKPSLAKPE (63 aa)).

It belongs to the PtdIns transfer protein family. PI transfer class IIB subfamily.

Its subcellular location is the cytoplasm. The enzyme catalyses a 1,2-diacyl-sn-glycero-3-phospho-(1D-myo-inositol)(in) = a 1,2-diacyl-sn-glycero-3-phospho-(1D-myo-inositol)(out). The catalysed reaction is a 1,2-diacyl-sn-glycero-3-phosphate(in) = a 1,2-diacyl-sn-glycero-3-phosphate(out). Catalyzes the transfer of phosphatidylinositol (PI) and phosphatidic acid (PA) between membranes. Binds PA derived from the phospholipase D signaling pathway and among the cellular PA species, preferably binds to the C16:0/16:1 and C16:1/18:1 PA species. This is Cytoplasmic phosphatidylinositol transfer protein 1 (pitpnc1) from Xenopus tropicalis (Western clawed frog).